The chain runs to 233 residues: Probable 2-phosphosulfolactate phosphatase (233 aa).

Belongs to the ComB family. Mg(2+) serves as cofactor.

The catalysed reaction is (2R)-O-phospho-3-sulfolactate + H2O = (2R)-3-sulfolactate + phosphate. This Clostridium tetani (strain Massachusetts / E88) protein is Probable 2-phosphosulfolactate phosphatase.